The chain runs to 2261 residues: Phospholipid-transporting ATPase ABCA1 (2261 aa).

C3 carries S-palmitoyl cysteine lipidation. N14 is a glycosylation site (N-linked (GlcNAc...) asparagine). The chain crosses the membrane as a helical span at residues 22–42 (TCQLLLEVAWPLFIFLILISV). A lipid anchor (S-palmitoyl cysteine) is attached at C23. Residues 43 to 639 (RLSYPPYEQH…DIFLRVMSRS (597 aa)) lie on the Extracellular side of the membrane. The interval 69 to 80 (WVQGIICNANNP) is annulus domain 1. C75 and C309 are disulfide-bonded. N-linked (GlcNAc...) asparagine glycosylation is found at N98, N151, N161, N196, N244, N292, N337, and N349. Residues 368–379 (SRIIWKALKPLL) form an annulus domain 2 region. N-linked (GlcNAc...) asparagine glycans are attached at residues N400, N478, N489, and N521. Residues 564-594 (ERTNKIKDGYWDPGPRADPFEDMRYVWGGFA) are gateway domain. The next 5 membrane-spanning stretches (helical) occupy residues 640 to 660 (MPLFMTLAWIYSVAVIIKSIV), 683 to 703 (FSWFVSSLIPLLVSAGLLVVI), 716 to 736 (SVVFVFLSVFAMVTILQCFLI), 745 to 765 (LAAACGGIIYFTLYLPYVLCV), and 777 to 797 (IFASLLSPVAFGFGCEYFALF). N-linked (GlcNAc...) asparagine glycosylation occurs at N820. Residues 827 to 847 (MMLFDTFLYGVMTWYIEAVFP) traverse the membrane as a helical segment. Positions 899 to 1131 (VSIQNLVKVY…LGTGYYLTLV (233 aa)) constitute an ABC transporter 1 domain. 933-940 (GHNGAGKT) is an ATP binding site. Residues 941–961 (TTMSILTGLFPPTSGTAYILG) traverse the membrane as a helical segment. Residue S1042 is modified to Phosphoserine; by PKA. S-palmitoyl cysteine attachment occurs at residues C1110 and C1111. N-linked (GlcNAc...) asparagine glycans are attached at residues N1144 and N1294. The interval 1285 to 1310 (FTEDDAVDPNDSDIDPESRETDLLSG) is disordered. Residues 1287 to 1299 (EDDAVDPNDSDID) are compositionally biased toward acidic residues. S1296 is subject to Phosphoserine. Residues 1351–1371 (IVLPAVFVCIALVFSLIVPPF) form a helical membrane-spanning segment. The Extracellular portion of the chain corresponds to 1372-1656 (GKYPSLELQP…ALMTTSVDVL (285 aa)). Residue N1453 is glycosylated (N-linked (GlcNAc...) asparagine). A disulfide bridge links C1463 with C1477. Residues N1499, N1504, and N1637 are each glycosylated (N-linked (GlcNAc...) asparagine). The next 6 membrane-spanning stretches (helical) occupy residues 1657-1677 (VSICVIFAMSFVPASFVVFLI), 1703-1723 (FVWDMCNYVVPATLVIIIFIC), 1735-1755 (LPVLALLLLLYGWSITPLMYP), 1768-1788 (VVLTSVNLFIGINGSVATFVL), 1802-1822 (ILKSVFLIFPHFCLGRGLIDM), and 1852-1872 (NLFAMAVEGVVFFLITVLIQY). The ABC transporter 2 domain maps to 1912-2144 (LEIKELTKIY…FGDGYTIVVR (233 aa)). Residue 1946–1953 (GVNGAGKS) participates in ATP binding. N2044 carries N-linked (GlcNAc...) asparagine glycosylation. S2054 carries the post-translational modification Phosphoserine; by PKA. N2238 carries an N-linked (GlcNAc...) asparagine glycan.

Belongs to the ABC transporter superfamily. ABCA family. Interacts with MEGF10. May interact with APOE1; functionally associated with APOE1 in the biogenesis of HDLs. Interacts with ABCA8; this interaction potentiates cholesterol efflux. Interacts with ABCA12 and NR1H2; this interaction is required for ABCA1 localization to the cell surface and is necessary for its normal activity and stability. Phosphorylation on Ser-2054 regulates phospholipid efflux. In terms of processing, palmitoylated by ZDHHC8. Palmitoylation is essential for localization to the plasma membrane. As to expression, widely expressed in adult tissues. Highest levels are found in pregnant uterus and uterus.

It localises to the cell membrane. The protein resides in the endosome. It catalyses the reaction ATP + H2O + phospholipidSide 1 = ADP + phosphate + phospholipidSide 2.. It carries out the reaction a 1,2-diacyl-sn-glycero-3-phosphocholine(out) + ATP + H2O = a 1,2-diacyl-sn-glycero-3-phosphocholine(in) + ADP + phosphate + H(+). The enzyme catalyses a 1,2-diacyl-sn-glycero-3-phospho-L-serine(out) + ATP + H2O = a 1,2-diacyl-sn-glycero-3-phospho-L-serine(in) + ADP + phosphate + H(+). The catalysed reaction is a sphingomyelin(in) + ATP + H2O = a sphingomyelin(out) + ADP + phosphate + H(+). It catalyses the reaction cholesterol(in) + ATP + H2O = cholesterol(out) + ADP + phosphate + H(+). With respect to regulation, ATPase activity is decreased by cholesterol and ceramide. ATPase activity is stimulated by phosphatidylcholine and to a lesser degree by phosphatidylserine and sphingomyelin. Phospholipid translocase activity is highly reduced by berylium fluoride and aluminum flouride and reduced by N-ethylmaleimide. Its function is as follows. Catalyzes the translocation of specific phospholipids from the cytoplasmic to the extracellular/lumenal leaflet of membrane coupled to the hydrolysis of ATP. Thereby, participates in phospholipid transfer to apolipoproteins to form nascent high density lipoproteins/HDLs. Transports preferentially phosphatidylcholine over phosphatidylserine. May play a similar role in the efflux of intracellular cholesterol to apolipoproteins and the formation of nascent high density lipoproteins/HDLs. Translocates phospholipids from the outer face of the plasma membrane and forces it through its gateway and annulus into an elongated hydrophobic tunnel in its extracellular domain. The protein is Phospholipid-transporting ATPase ABCA1 of Mus musculus (Mouse).